A 261-amino-acid polypeptide reads, in one-letter code: Segregation and condensation protein A (261 aa).

This sequence belongs to the ScpA family. As to quaternary structure, component of a cohesin-like complex composed of ScpA, ScpB and the Smc homodimer, in which ScpA and ScpB bind to the head domain of Smc. The presence of the three proteins is required for the association of the complex with DNA.

It localises to the cytoplasm. In terms of biological role, participates in chromosomal partition during cell division. May act via the formation of a condensin-like complex containing Smc and ScpB that pull DNA away from mid-cell into both cell halves. This chain is Segregation and condensation protein A, found in Ligilactobacillus salivarius (strain UCC118) (Lactobacillus salivarius).